A 126-amino-acid chain; its full sequence is Small ribosomal subunit protein uS13c (126 aa).

Residues G100 to K126 are disordered. Residues Q101 to K126 are compositionally biased toward basic residues.

Belongs to the universal ribosomal protein uS13 family. As to quaternary structure, part of the 30S ribosomal subunit.

Its subcellular location is the plastid. The protein localises to the cyanelle. Functionally, located at the top of the head of the 30S subunit, it contacts several helices of the 16S rRNA. The sequence is that of Small ribosomal subunit protein uS13c from Cyanophora paradoxa.